Consider the following 541-residue polypeptide: Membrane protein insertase YidC (541 aa).

The next 5 membrane-spanning stretches (helical) occupy residues 7–27, 345–365, 415–435, 453–473, and 492–512; these read LLFMALLFISFLIYQQWQVDY, LVQNWGLAIIGVTLVVKAVLY, LGGCLPILLQMPIFIALYWTF, LSAQDPYFILPILMGASMFLL, and FMPLIFMVFFLFFPAGLVLYW.

It belongs to the OXA1/ALB3/YidC family. Type 1 subfamily. Interacts with the Sec translocase complex via SecD. Specifically interacts with transmembrane segments of nascent integral membrane proteins during membrane integration.

The protein resides in the cell inner membrane. In terms of biological role, required for the insertion and/or proper folding and/or complex formation of integral membrane proteins into the membrane. Involved in integration of membrane proteins that insert both dependently and independently of the Sec translocase complex, as well as at least some lipoproteins. Aids folding of multispanning membrane proteins. The chain is Membrane protein insertase YidC from Histophilus somni (strain 2336) (Haemophilus somnus).